The primary structure comprises 426 residues: Riboflavin biosynthesis protein PYRD, chloroplastic (426 aa).

Residues 1–61 constitute a chloroplast transit peptide; it reads MQISCLPISI…SQTGFSNPVL (61 aa). A CMP/dCMP-type deaminase domain is found at 72 to 194; it reads VDDSFYMRKC…RLKDAGIDVT (123 aa). His-121 serves as a coordination point for Zn(2+). Glu-123 (proton donor) is an active-site residue. Positions 146 and 155 each coordinate Zn(2+).

Zn(2+) is required as a cofactor.

It localises to the plastid. The protein resides in the chloroplast. It catalyses the reaction 2,5-diamino-6-hydroxy-4-(5-phosphoribosylamino)-pyrimidine + H2O + H(+) = 5-amino-6-(5-phospho-D-ribosylamino)uracil + NH4(+). The protein operates within cofactor biosynthesis; riboflavin biosynthesis; 5-amino-6-(D-ribitylamino)uracil from GTP: step 2/4. Its function is as follows. Monofunctional pyrimidine deaminase involved in the riboflavin biosynthesis pathway. Also has a reductase domain that lacks catalytically essential substrate-binding residues. This Arabidopsis thaliana (Mouse-ear cress) protein is Riboflavin biosynthesis protein PYRD, chloroplastic (PYRD).